Here is an 890-residue protein sequence, read N- to C-terminus: DNA mismatch repair protein MutS (890 aa).

An ATP-binding site is contributed by 607 to 614; sequence GPNMSGKS.

It belongs to the DNA mismatch repair MutS family.

In terms of biological role, this protein is involved in the repair of mismatches in DNA. It is possible that it carries out the mismatch recognition step. This protein has a weak ATPase activity. The chain is DNA mismatch repair protein MutS from Bacillus thuringiensis (strain Al Hakam).